Here is a 417-residue protein sequence, read N- to C-terminus: MSNLFITNVKTILTAPGGIDLVVVKIETNEPGLYGLGCATFTQRIYAVQSAIDEYLAPFLIGKDPARIEDIWQSAAVSGYWRNGPVMNNALSGIDMALWDIKGKQAGLPVYELLGGKCRDGIALYVHTDGADEVEVEDSARAKMEEGYQYIRCQMGMYGGAGTDDLRLIANRMVKAKNIQPKRSPRTKAPGIYFDPEAYAKSIPRLFDHLRNKLGFSVELLHDAHERITPINAIHMAKALEPYQLFFLEDPVAPENTEWLKMLRQQSSTPIAMGELFVNVNEWKPLIDNKLIDYIRCHISSIGGITPAKKIAIYSELNGVRTAWHSPGDISPIGVCANMHLDLSSPNFGIQEYTPMNDALREVFPGCPEVDQGYAYVNDKPGLGIDINEALAAKFPCEGGNPTWTMARTPDGTVWRP.

Substrate is bound by residues Q43 and H127. Y158 serves as the catalytic Proton donor/acceptor. D223 contacts Mg(2+). H225 functions as the Proton donor/acceptor in the catalytic mechanism. Residues E249 and E275 each contribute to the Mg(2+) site. Residues E275, R296, H325, D329, and E352 each contribute to the substrate site.

Belongs to the mandelate racemase/muconate lactonizing enzyme family. GalD subfamily. Mg(2+) serves as cofactor.

The enzyme catalyses D-gluconate = 2-dehydro-3-deoxy-D-gluconate + H2O. Its function is as follows. Has low D-gluconate dehydratase activity (in vitro), suggesting that it has no significant role in D-gluconate degradation in vivo. Has no detectable activity with a panel of 70 other acid sugars (in vitro). This is D-galactonate dehydratase family member RspA (rspA) from Pantoea ananatis (strain LMG 20103).